A 315-amino-acid polypeptide reads, in one-letter code: Taste receptor type 2 member 3 (315 aa).

Residues 1–5 lie on the Extracellular side of the membrane; that stretch reads MGLTE. The helical transmembrane segment at 6–26 threads the bilayer; it reads GVFLILSGTQFTLGILVNCFI. The Cytoplasmic portion of the chain corresponds to 27-41; that stretch reads ELVNGSSWFKTKRMS. Residues 42–62 form a helical membrane-spanning segment; that stretch reads LSDFIITTLALLRIILLCIIL. Residues 63–93 lie on the Extracellular side of the membrane; that stretch reads TDSFLIEFSPNTHDSGIIMQIIDVSWTFTNH. The chain crosses the membrane as a helical span at residues 94–114; that stretch reads LSIWLATCLGVLYCLKIASFS. At 115–127 the chain is on the cytoplasmic side; it reads HPTFLWLKWRVSR. The helical transmembrane segment at 128-148 threads the bilayer; the sequence is VMVWMLLGALLLSCGSTASLI. Over 149–185 the chain is Extracellular; that stretch reads NEFKLYSVFRGIEATRNVTEHFRKKRSEYYLIHVLGT. Asparagine 165 is a glycosylation site (N-linked (GlcNAc...) asparagine). A helical transmembrane segment spans residues 186-206; it reads LWYLPPLIVSLASYSLLIFSL. Residues 207–233 are Cytoplasmic-facing; the sequence is GRHTRQMLQNGTSSRDPTTEAHKRAIR. The chain crosses the membrane as a helical span at residues 234-254; sequence IILSFFFLFLLYFLAFLIASF. Residues 255–265 lie on the Extracellular side of the membrane; it reads GNFLPKTKMAK. A helical transmembrane segment spans residues 266–286; that stretch reads MIGEVMTMFYPAGHSFILILG. The Cytoplasmic portion of the chain corresponds to 287-315; the sequence is NSKLKQTFVVMLRCESGHLKPGSKGPIFS.

The protein belongs to the G-protein coupled receptor T2R family.

The protein resides in the membrane. Functionally, gustducin-coupled receptor implicated in the perception of bitter compounds in the oral cavity and the gastrointestinal tract. Signals through PLCB2 and the calcium-regulated cation channel TRPM5. This Gorilla gorilla gorilla (Western lowland gorilla) protein is Taste receptor type 2 member 3 (TAS2R3).